An 822-amino-acid polypeptide reads, in one-letter code: Probable RING finger protein 207 homolog (822 aa).

The RING-type zinc finger occupies 8–42 (CTICKNEFEEPILLSCQHTTCRKCSTGSPSCKSCS). Residues 68–115 (EEMEECANCEQISLPMFYCETCQQSLCLVCRNVTHQARMFSSHKIISS) form a B box-type 1; atypical zinc finger. Residues Cys-73, Cys-76, Cys-97, and His-102 each contribute to the Zn(2+) site. Residues 122-164 (YSSSLCKDHNEPYILYCSDVRKLVCIQCFNGRPLEERHSFISI) form a B box-type 2; degenerate zinc finger. 2 coiled-coil regions span residues 526–558 (NSQN…GQSA) and 738–769 (DKDE…KVSE).

The polypeptide is Probable RING finger protein 207 homolog (Caenorhabditis elegans).